The primary structure comprises 175 residues: Bifunctional protein PyrR (175 aa).

The short motif at 97 to 109 (IVLIDDVLFTGRT) is the PRPP-binding element.

The protein belongs to the purine/pyrimidine phosphoribosyltransferase family. PyrR subfamily. In terms of assembly, homodimer and homohexamer; in equilibrium.

The catalysed reaction is UMP + diphosphate = 5-phospho-alpha-D-ribose 1-diphosphate + uracil. Functionally, regulates transcriptional attenuation of the pyrimidine nucleotide (pyr) operon by binding in a uridine-dependent manner to specific sites on pyr mRNA. This disrupts an antiterminator hairpin in the RNA and favors formation of a downstream transcription terminator, leading to a reduced expression of downstream genes. Also displays a weak uracil phosphoribosyltransferase activity which is not physiologically significant. The protein is Bifunctional protein PyrR of Leuconostoc mesenteroides subsp. mesenteroides (strain ATCC 8293 / DSM 20343 / BCRC 11652 / CCM 1803 / JCM 6124 / NCDO 523 / NBRC 100496 / NCIMB 8023 / NCTC 12954 / NRRL B-1118 / 37Y).